A 58-amino-acid polypeptide reads, in one-letter code: Metallothionein-1 (58 aa).

Residues 1-28 (PGPCCNDKCVCKEGGCKEGCQCTSCRCS) form a beta region. Positions 4, 5, 9, 11, 16, 20, 22, 25, 27, 30, 33, 37, 39, 45, 49, 53, 55, and 56 each coordinate a divalent metal cation. An alpha region spans residues 29–58 (PCEKCSSGCKCANKEECSKTCSKACSCCPT).

This sequence belongs to the metallothionein superfamily. Type 3 family.

Its function is as follows. Metallothioneins have a high content of cysteine residues that bind various heavy metals. Class I MTS in marine crustacea are involved in the sequestration of elevated levels of heavy-metal ions. The polypeptide is Metallothionein-1 (Scylla serrata (Mud crab)).